The following is a 286-amino-acid chain: 3-hydroxyanthranilate 3,4-dioxygenase (286 aa).

Positions 1–160 (MERRVRVKSW…SEQYRTGKPN (160 aa)) are domain A (catalytic). Arg-43 contributes to the O2 binding site. His-47, Glu-53, and His-91 together coordinate Fe cation. Residue Glu-53 coordinates substrate. Residues Arg-95 and Glu-105 each coordinate substrate. The linker stretch occupies residues 161 to 177 (PDQLLKELPFPLNTRSI). Residues 178-286 (MKPMSLKAWL…QDPARKKPWW (109 aa)) are domain B.

Belongs to the 3-HAO family. Monomer. Fe(2+) serves as cofactor.

The protein resides in the cytoplasm. It is found in the cytosol. It catalyses the reaction 3-hydroxyanthranilate + O2 = (2Z,4Z)-2-amino-3-carboxymuconate 6-semialdehyde. It participates in cofactor biosynthesis; NAD(+) biosynthesis; quinolinate from L-kynurenine: step 3/3. Its function is as follows. Catalyzes the oxidative ring opening of 3-hydroxyanthranilate to 2-amino-3-carboxymuconate semialdehyde, which spontaneously cyclizes to quinolinate. This Mus musculus (Mouse) protein is 3-hydroxyanthranilate 3,4-dioxygenase (Haao).